A 333-amino-acid polypeptide reads, in one-letter code: Starch-binding domain-containing protein 1 (333 aa).

Over 1–6 (MGAVWS) the chain is Extracellular. Residues 7-23 (ALLVGGGLAGALILWLL) form a helical membrane-spanning segment. The Cytoplasmic segment spans residues 24–333 (RGDSGAPGKD…KVVHGWWGIH (310 aa)). 2 disordered regions span residues 31–73 (GKDG…ELVS) and 106–139 (NARE…RVGE). Over residues 50–61 (PGGGPGGGGSGG) the composition is skewed to gly residues. At Ser67 the chain carries Phosphoserine. Over residues 124–134 (NSETSRNQSPE) the composition is skewed to polar residues. Phosphoserine occurs at positions 135 and 162. The LIR motif lies at 181-187 (HEDWEVV). Phosphoserine occurs at positions 191, 192, 201, 205, 208, 216, and 219. Positions 233 to 332 (SVKPRQVSIQ…DKVVHGWWGI (100 aa)) constitute a CBM20 domain.

As to quaternary structure, interacts with the ATG8 family proteins GABARAP and GABARAPL1. Interacts with several glycogen-associated proteins, such as GYS2 (liver glycogen synthase), GDE (glycogen debranching enzyme), GBE1 (glycogen branching enzyme 1) and EPM2A (Laforin). Ubiquitinated, which leads to proteasomal degradation.

The protein resides in the preautophagosomal structure membrane. It is found in the endoplasmic reticulum membrane. Its subcellular location is the cell membrane. It localises to the sarcolemma. The protein localises to the T-tubule. Its function is as follows. Acts as a cargo receptor for glycogen. Delivers its cargo to an autophagic pathway called glycophagy, resulting in the transport of glycogen to lysosomes. The polypeptide is Starch-binding domain-containing protein 1 (Rattus norvegicus (Rat)).